Reading from the N-terminus, the 249-residue chain is DnaJ homolog subfamily C member 5 homolog (249 aa).

Phosphoserine is present on Ser12. Thr13 carries the post-translational modification Phosphothreonine. 2 positions are modified to phosphoserine: Ser14 and Ser17. The region spanning 15–84 (GDSLYEILGL…RNIYDNYGSL (70 aa)) is the J domain. Tyr19 is modified (phosphotyrosine). Residues 146 to 162 (HDQYSHLNRPDGNREGN) show a composition bias toward basic and acidic residues. Disordered regions lie at residues 146–177 (HDQYSHLNRPDGNREGNDMPTHLGQPPRLEDV) and 218–249 (PFTGAPVAANENTSLNTTEQTTYTPDMVNQKY). Residues 227–241 (NENTSLNTTEQTTYT) are compositionally biased toward polar residues.

Fatty acylated. Heavily palmitoylated in the cysteine string motif. Expressed in wide range of synaptic terminals: embryonic nervous system, larval neuromuscular junctions, adult visual system (neuropil of optic ganglia and terminal of R1-8 photoreceptors) and thoracic neuromuscular junctions. Also expressed in non-neuronal cells: follicle cells, spermatheca, testis and ejaculatory bulb. Low level of expression is found in many neuronal and non-neuronal tissues.

It is found in the membrane. Its function is as follows. May have an important role in presynaptic function. This chain is DnaJ homolog subfamily C member 5 homolog, found in Drosophila melanogaster (Fruit fly).